The sequence spans 1058 residues: Carbamoyl phosphate synthase large chain (1058 aa).

The segment at 1–399 (MPIDKDIKKV…AIQKAIRSLD (399 aa)) is carboxyphosphate synthetic domain. Residues Arg-127, Arg-167, Gly-173, Gly-174, Glu-206, Val-208, Glu-213, Gly-239, Ile-240, His-241, Gln-282, and Glu-296 each contribute to the ATP site. The region spanning 131-325 (GHFMDKLNEP…IAKISSKIAL (195 aa)) is the ATP-grasp 1 domain. Residues Gln-282, Glu-296, and Asn-298 each coordinate Mg(2+). Residues Gln-282, Glu-296, and Asn-298 each contribute to the Mn(2+) site. The oligomerization domain stretch occupies residues 400–538 (MGHDGFEYVE…YSTYDSGNEL (139 aa)). The interval 539-924 (KSSNKKKIVI…YKSQLAAGMD (386 aa)) is carbamoyl phosphate synthetic domain. Residues 663–856 (AKLLNKLHIH…LAKVATWIMT (194 aa)) form the ATP-grasp 2 domain. ATP is bound by residues Arg-699, Lys-738, Leu-740, Glu-745, Gly-770, Val-771, His-772, Ser-773, Gln-813, and Glu-827. Residues Gln-813, Glu-827, and Asn-829 each coordinate Mg(2+). The Mn(2+) site is built by Gln-813, Glu-827, and Asn-829. The MGS-like domain occupies 923–1058 (MDLPKEGKIF…KSLNEHIDGE (136 aa)). Residues 925–1058 (LPKEGKIFIS…KSLNEHIDGE (134 aa)) form an allosteric domain region.

Belongs to the CarB family. As to quaternary structure, composed of two chains; the small (or glutamine) chain promotes the hydrolysis of glutamine to ammonia, which is used by the large (or ammonia) chain to synthesize carbamoyl phosphate. Tetramer of heterodimers (alpha,beta)4. Mg(2+) serves as cofactor. Mn(2+) is required as a cofactor.

The enzyme catalyses hydrogencarbonate + L-glutamine + 2 ATP + H2O = carbamoyl phosphate + L-glutamate + 2 ADP + phosphate + 2 H(+). The catalysed reaction is hydrogencarbonate + NH4(+) + 2 ATP = carbamoyl phosphate + 2 ADP + phosphate + 2 H(+). The protein operates within amino-acid biosynthesis; L-arginine biosynthesis; carbamoyl phosphate from bicarbonate: step 1/1. Its pathway is pyrimidine metabolism; UMP biosynthesis via de novo pathway; (S)-dihydroorotate from bicarbonate: step 1/3. Its function is as follows. Large subunit of the glutamine-dependent carbamoyl phosphate synthetase (CPSase). CPSase catalyzes the formation of carbamoyl phosphate from the ammonia moiety of glutamine, carbonate, and phosphate donated by ATP, constituting the first step of 2 biosynthetic pathways, one leading to arginine and/or urea and the other to pyrimidine nucleotides. The large subunit (synthetase) binds the substrates ammonia (free or transferred from glutamine from the small subunit), hydrogencarbonate and ATP and carries out an ATP-coupled ligase reaction, activating hydrogencarbonate by forming carboxy phosphate which reacts with ammonia to form carbamoyl phosphate. The polypeptide is Carbamoyl phosphate synthase large chain (Methanobrevibacter smithii (strain ATCC 35061 / DSM 861 / OCM 144 / PS)).